The primary structure comprises 235 residues: MKFFIFTCLLAVAFAKHEMEHVSSSEESINISQEKYKQEKNVINHPSKEDICATSCEEAVRNIKEVGYASSSSSEESVDIPAENVKVTVEDKHYLKQLEKISQFYQKFPQYLQALYQAQIVMNPWDQTKTSAYPFIPTVIQSGEELSTSEEPVSSSQEENTKTVDMESMEEFTKKTELTEEEKNRIKFLNKIKQYYQKFTWPQYIKTVHQKQKAMKPWNHIKTNSYQIIPNLRYF.

An N-terminal signal peptide occupies residues 1–15 (MKFFIFTCLLAVAFA). 12 positions are modified to phosphoserine: serine 23, serine 24, serine 25, serine 28, serine 47, serine 72, serine 73, serine 74, serine 77, serine 147, serine 149, and serine 168. Over residues 144–158 (EELSTSEEPVSSSQE) the composition is skewed to polar residues. Residues 144–163 (EELSTSEEPVSSSQEENTKT) are disordered.

The protein belongs to the alpha-casein family. As to expression, mammary gland specific. Secreted in milk.

It is found in the secreted. Functionally, important role in the capacity of milk to transport calcium phosphate. The chain is Alpha-S2-casein (CSN1S2) from Sus scrofa (Pig).